We begin with the raw amino-acid sequence, 219 residues long: Probable nicotinate-nucleotide adenylyltransferase (219 aa).

This sequence belongs to the NadD family.

It catalyses the reaction nicotinate beta-D-ribonucleotide + ATP + H(+) = deamido-NAD(+) + diphosphate. The protein operates within cofactor biosynthesis; NAD(+) biosynthesis; deamido-NAD(+) from nicotinate D-ribonucleotide: step 1/1. Its function is as follows. Catalyzes the reversible adenylation of nicotinate mononucleotide (NaMN) to nicotinic acid adenine dinucleotide (NaAD). The chain is Probable nicotinate-nucleotide adenylyltransferase from Hahella chejuensis (strain KCTC 2396).